The chain runs to 91 residues: Small ribosomal subunit protein uS15c (91 aa).

It belongs to the universal ribosomal protein uS15 family. As to quaternary structure, part of the 30S ribosomal subunit.

The protein localises to the plastid. It localises to the chloroplast. In Ceratophyllum demersum (Rigid hornwort), this protein is Small ribosomal subunit protein uS15c (rps15).